A 144-amino-acid polypeptide reads, in one-letter code: Small ribosomal subunit protein eS10A (144 aa).

The segment at Thr-90 to Gln-144 is disordered. Over residues Gly-103–Gly-126 the composition is skewed to basic and acidic residues.

It belongs to the eukaryotic ribosomal protein eS10 family. In terms of assembly, component of the small ribosomal subunit (SSU). Mature yeast ribosomes consist of a small (40S) and a large (60S) subunit. The 40S small subunit contains 1 molecule of ribosomal RNA (18S rRNA) and at least 33 different proteins. The large 60S subunit contains 3 rRNA molecules (25S, 5.8S and 5S rRNA) and at least 46 different proteins. eS10 interacts with GCN1 (via middle region); this interaction is direct and promotes GCN2 kinase activity.

The protein localises to the cytoplasm. Functionally, component of the ribosome, a large ribonucleoprotein complex responsible for the synthesis of proteins in the cell. The small ribosomal subunit (SSU) binds messenger RNAs (mRNAs) and translates the encoded message by selecting cognate aminoacyl-transfer RNA (tRNA) molecules. The large subunit (LSU) contains the ribosomal catalytic site termed the peptidyl transferase center (PTC), which catalyzes the formation of peptide bonds, thereby polymerizing the amino acids delivered by tRNAs into a polypeptide chain. The nascent polypeptides leave the ribosome through a tunnel in the LSU and interact with protein factors that function in enzymatic processing, targeting, and the membrane insertion of nascent chains at the exit of the ribosomal tunnel. eS10 plays a role as a positive regulator of the GCN2 kinase activity by stimulating GCN1-mediated GCN2 activation. This chain is Small ribosomal subunit protein eS10A (rps1001), found in Schizosaccharomyces pombe (strain 972 / ATCC 24843) (Fission yeast).